We begin with the raw amino-acid sequence, 233 residues long: Coenzyme Q-binding protein COQ10 homolog, mitochondrial (233 aa).

The transit peptide at 1 to 34 (MAEKATSLFLRAMEISEKQSFDVMRRNSSCTIRH) directs the protein to the mitochondrion.

This sequence belongs to the COQ10 family. In terms of assembly, interacts with coenzyme Q.

It is found in the mitochondrion inner membrane. Required for the function of coenzyme Q in the respiratory chain. May serve as a chaperone or may be involved in the transport of Q6 from its site of synthesis to the catalytic sites of the respiratory complexes. This Danio rerio (Zebrafish) protein is Coenzyme Q-binding protein COQ10 homolog, mitochondrial.